The chain runs to 170 residues: Acetyl-CoA decarbonylase/synthase complex subunit epsilon 1 (170 aa).

This sequence belongs to the CdhB family. In terms of assembly, heterotetramer of two alpha and two epsilon subunits. The ACDS complex is made up of alpha, epsilon, beta, gamma and delta subunits with a probable stoichiometry of (alpha(2)epsilon(2))(4)-beta(8)-(gamma(1)delta(1))(8).

Its pathway is one-carbon metabolism; methanogenesis from acetate. Its function is as follows. Part of a complex that catalyzes the reversible cleavage of acetyl-CoA, allowing growth on acetate as sole source of carbon and energy. The alpha-epsilon subcomponent functions as a carbon monoxide dehydrogenase. The precise role of the epsilon subunit is unclear; it may have a stabilizing role within the alpha(2)epsilon(2) component and/or be involved in electron transfer to FAD during a potential FAD-mediated CO oxidation. The chain is Acetyl-CoA decarbonylase/synthase complex subunit epsilon 1 from Methanosarcina barkeri (strain Fusaro / DSM 804).